We begin with the raw amino-acid sequence, 90 residues long: MALNLEKKQEIIKAFATKENDTGSCEVQVALLNERIKLLTEHLKANPKDHSSRLGLLKLVAQRRNLLKYIKRTAHARYVVLIEKLGIKDR.

This sequence belongs to the universal ribosomal protein uS15 family. Part of the 30S ribosomal subunit. Forms a bridge to the 50S subunit in the 70S ribosome, contacting the 23S rRNA.

Functionally, one of the primary rRNA binding proteins, it binds directly to 16S rRNA where it helps nucleate assembly of the platform of the 30S subunit by binding and bridging several RNA helices of the 16S rRNA. In terms of biological role, forms an intersubunit bridge (bridge B4) with the 23S rRNA of the 50S subunit in the ribosome. In Helicobacter pylori (strain P12), this protein is Small ribosomal subunit protein uS15.